The primary structure comprises 300 residues: 4-hydroxy-tetrahydrodipicolinate synthase (300 aa).

Position 45 (Thr45) interacts with pyruvate. Residue Tyr140 is the Proton donor/acceptor of the active site. Lys169 acts as the Schiff-base intermediate with substrate in catalysis. Ile210 contacts pyruvate.

It belongs to the DapA family. In terms of assembly, homotetramer; dimer of dimers.

Its subcellular location is the cytoplasm. It carries out the reaction L-aspartate 4-semialdehyde + pyruvate = (2S,4S)-4-hydroxy-2,3,4,5-tetrahydrodipicolinate + H2O + H(+). It participates in amino-acid biosynthesis; L-lysine biosynthesis via DAP pathway; (S)-tetrahydrodipicolinate from L-aspartate: step 3/4. Functionally, catalyzes the condensation of (S)-aspartate-beta-semialdehyde [(S)-ASA] and pyruvate to 4-hydroxy-tetrahydrodipicolinate (HTPA). The sequence is that of 4-hydroxy-tetrahydrodipicolinate synthase from Helicobacter pylori (strain G27).